A 251-amino-acid chain; its full sequence is Membrane-anchored junction protein (251 aa).

Over 1–227 (MSLKPFTYPF…HSNPPPLKEP (227 aa)) the chain is Nuclear. Residues 140–225 (RKRKLMEEPS…LEHSNPPPLK (86 aa)) form a disordered region. The span at 183 to 198 (EDSQQDTPASDSTAVT) shows a compositional bias: polar residues. A helical transmembrane segment spans residues 228–246 (AARGFLGFLSALFPFRYFF). Over 247-251 (RKSTQ) the chain is Perinuclear space.

It belongs to the MAJIN family. Component of the MAJIN-TERB1-TERB2 complex, composed of MAJIN, TERB1 and TERB2.

The protein localises to the nucleus inner membrane. It localises to the chromosome. The protein resides in the telomere. Functionally, meiosis-specific telomere-associated protein involved in meiotic telomere attachment to the nucleus inner membrane, a crucial step for homologous pairing and synapsis. Component of the MAJIN-TERB1-TERB2 complex, which promotes telomere cap exchange by mediating attachment of telomeric DNA to the inner nuclear membrane and replacement of the protective cap of telomeric chromosomes: in early meiosis, the MAJIN-TERB1-TERB2 complex associates with telomeric DNA and the shelterin/telosome complex. During prophase, the complex matures and promotes release of the shelterin/telosome complex from telomeric DNA. In the complex, MAJIN acts as the anchoring subunit to the nucleus inner membrane. MAJIN shows DNA-binding activity, possibly for the stabilization of telomere attachment on the nucleus inner membrane. This Rattus norvegicus (Rat) protein is Membrane-anchored junction protein.